We begin with the raw amino-acid sequence, 248 residues long: UDP-2,3-diacylglucosamine hydrolase (248 aa).

Mn(2+) is bound by residues Asp-8, His-10, Asp-41, Asn-79, and His-114. Position 79–80 (79–80) interacts with substrate; sequence NR. Residues Asp-122, Ser-160, Asp-171, and His-202 each coordinate substrate. The Mn(2+) site is built by His-202 and His-204.

It belongs to the LpxH family. Requires Mn(2+) as cofactor.

The protein localises to the cell inner membrane. It catalyses the reaction UDP-2-N,3-O-bis[(3R)-3-hydroxytetradecanoyl]-alpha-D-glucosamine + H2O = 2-N,3-O-bis[(3R)-3-hydroxytetradecanoyl]-alpha-D-glucosaminyl 1-phosphate + UMP + 2 H(+). It functions in the pathway glycolipid biosynthesis; lipid IV(A) biosynthesis; lipid IV(A) from (3R)-3-hydroxytetradecanoyl-[acyl-carrier-protein] and UDP-N-acetyl-alpha-D-glucosamine: step 4/6. In terms of biological role, hydrolyzes the pyrophosphate bond of UDP-2,3-diacylglucosamine to yield 2,3-diacylglucosamine 1-phosphate (lipid X) and UMP by catalyzing the attack of water at the alpha-P atom. Involved in the biosynthesis of lipid A, a phosphorylated glycolipid that anchors the lipopolysaccharide to the outer membrane of the cell. This chain is UDP-2,3-diacylglucosamine hydrolase, found in Stenotrophomonas maltophilia (strain R551-3).